An 86-amino-acid polypeptide reads, in one-letter code: U15-lycotoxin-Ls1d (86 aa).

Residues 1-20 (MNSKIFAVLLLLALLSCVLS) form the signal peptide. The WAP domain occupies 21 to 66 (DQYCPKSSITACKKMNIRNDCCKDDDCTGGSWCCATPCGNFCKYPT). 5 disulfide bridges follow: Cys24/Cys54, Cys32/Cys58, Cys41/Cys53, Cys42/Cys80, and Cys47/Cys62.

Belongs to the venom protein 11 family. 01 (wap-1) subfamily. In terms of processing, contains 5 disulfide bonds. Expressed by the venom gland.

It localises to the secreted. Functionally, has antibacterial activity. This is U15-lycotoxin-Ls1d from Lycosa singoriensis (Wolf spider).